The primary structure comprises 302 residues: Aurora/IPL1-related protein kinase 2 (302 aa).

A compositionally biased stretch (polar residues) spans 1-17 (MENKPQILQTKSKNTPN). The tract at residues 1–23 (MENKPQILQTKSKNTPNKGGKLS) is disordered. The Protein kinase domain maps to 27–277 (FEIGRPLGKG…LQEVKDHYWV (251 aa)). ATP-binding positions include 33–41 (LGKGKFGSV) and Lys56. Catalysis depends on Asp150, which acts as the Proton acceptor.

It belongs to the protein kinase superfamily. Ser/Thr protein kinase family. As to quaternary structure, interacts with zen-4 and icp-1. Part of a complex containing at least air-2; icp-1; csc-1 and bir-1. Interacts with tlk-1 and bmk-1.

The protein resides in the cytoplasm. Its subcellular location is the cytoskeleton. It is found in the chromosome. It localises to the midbody. The enzyme catalyses L-seryl-[protein] + ATP = O-phospho-L-seryl-[protein] + ADP + H(+). It carries out the reaction L-threonyl-[protein] + ATP = O-phospho-L-threonyl-[protein] + ADP + H(+). Functionally, serine/threonine-protein kinase which mediates both meiotic and mitotic chromosome segregation. Required for histone H3 'Ser-10' phosphorylation. Phosphorylates tlk-1 and zen-4. This Caenorhabditis briggsae protein is Aurora/IPL1-related protein kinase 2 (air-2).